Reading from the N-terminus, the 365-residue chain is uncharacterized protein (365 aa).

Belongs to the NAD(P)-dependent epimerase/dehydratase family.

It localises to the cytoplasm. The protein localises to the nucleus. This is an uncharacterized protein from Schizosaccharomyces pombe (strain 972 / ATCC 24843) (Fission yeast).